The chain runs to 160 residues: Endoribonuclease YbeY (160 aa).

His-118, His-122, and His-128 together coordinate Zn(2+).

Belongs to the endoribonuclease YbeY family. Zn(2+) is required as a cofactor.

It localises to the cytoplasm. Functionally, single strand-specific metallo-endoribonuclease involved in late-stage 70S ribosome quality control and in maturation of the 3' terminus of the 16S rRNA. The sequence is that of Endoribonuclease YbeY from Treponema pallidum (strain Nichols).